The chain runs to 105 residues: uncharacterized protein (105 aa).

A disordered region spans residues 80 to 105; the sequence is TGGPTSSTCTRRSDLATGRGSDRRPD.

This is an uncharacterized protein from Micromonospora rosea.